We begin with the raw amino-acid sequence, 1019 residues long: Type VI secretion system spike protein VgrG2b (1019 aa).

The interval 268-291 (AGRPFTESRLRGHRRDARVASVSG) is disordered. Residue His935 coordinates Zn(2+). Glu936 is a catalytic residue. His939 and Glu983 together coordinate Zn(2+).

This sequence belongs to the VgrG protein family. Interacts with Tla3; this interaction promotes Tle3 loading onto VgrG2b. Interacts with host gamma-tubulin ring complex components GCP1 and GCP4. Requires Zn(2+) as cofactor.

It is found in the secreted. Its function is as follows. Part of the H2 type VI secretion system (H2-T6SS) specialized secretion system, which delivers several virulence factors in both prokaryotic and eukaryotic cells during infection. Forms the spike at the tip of the elongating tube probably formed by haemolysin co-regulated protein 2b/Hcp2b. Allows the delivery of the Tle3 antibacterial toxin to target cells where it exerts its toxicity. Additionally, acts directly as an effector and promotes internalization by interacting with the host gamma-tubulin ring complex. Elicits toxicity also in the bacterial periplasm and disrupts bacterial cell morphology. Toxicity is counteracted by a cognate immunity protein. The protein is Type VI secretion system spike protein VgrG2b (vgrG2b) of Pseudomonas aeruginosa (strain ATCC 15692 / DSM 22644 / CIP 104116 / JCM 14847 / LMG 12228 / 1C / PRS 101 / PAO1).